We begin with the raw amino-acid sequence, 192 residues long: Ion-translocating oxidoreductase complex subunit B (192 aa).

The tract at residues 1–26 (MEMIVIAVVALTLLALLFGMLLGYAS) is hydrophobic. The region spanning 32 to 91 (EEDPVVDQVDELLPQSQCGQCGYPGCRPYAEAVANNGEQINRCVPGGEPVMQKIATLLNV) is the 4Fe-4S domain. [4Fe-4S] cluster contacts are provided by Cys49, Cys52, Cys57, Cys74, Cys117, Cys120, Cys123, Cys127, Cys147, Cys150, Cys153, and Cys157. 4Fe-4S ferredoxin-type domains follow at residues 108-137 (MLAVIDEPNCIGCTKCIQACPVDAIVGATR) and 138-167 (AMHTVMSDLCTGCNLCVDPCPTQCIELRPA).

The protein belongs to the 4Fe4S bacterial-type ferredoxin family. RnfB subfamily. As to quaternary structure, the complex is composed of six subunits: RnfA, RnfB, RnfC, RnfD, RnfE and RnfG. [4Fe-4S] cluster is required as a cofactor.

Its subcellular location is the cell inner membrane. Functionally, part of a membrane-bound complex that couples electron transfer with translocation of ions across the membrane. The protein is Ion-translocating oxidoreductase complex subunit B of Cronobacter sakazakii (strain ATCC BAA-894) (Enterobacter sakazakii).